Consider the following 141-residue polypeptide: Large ribosomal subunit protein uL11 (141 aa).

It belongs to the universal ribosomal protein uL11 family. In terms of assembly, part of the ribosomal stalk of the 50S ribosomal subunit. Interacts with L10 and the large rRNA to form the base of the stalk. L10 forms an elongated spine to which L12 dimers bind in a sequential fashion forming a multimeric L10(L12)X complex. Post-translationally, one or more lysine residues are methylated.

Its function is as follows. Forms part of the ribosomal stalk which helps the ribosome interact with GTP-bound translation factors. This Lactiplantibacillus plantarum (strain ATCC BAA-793 / NCIMB 8826 / WCFS1) (Lactobacillus plantarum) protein is Large ribosomal subunit protein uL11.